The sequence spans 252 residues: 2-succinyl-6-hydroxy-2,4-cyclohexadiene-1-carboxylate synthase (252 aa).

Belongs to the AB hydrolase superfamily. MenH family. Monomer.

The catalysed reaction is 5-enolpyruvoyl-6-hydroxy-2-succinyl-cyclohex-3-ene-1-carboxylate = (1R,6R)-6-hydroxy-2-succinyl-cyclohexa-2,4-diene-1-carboxylate + pyruvate. It functions in the pathway quinol/quinone metabolism; 1,4-dihydroxy-2-naphthoate biosynthesis; 1,4-dihydroxy-2-naphthoate from chorismate: step 3/7. Its pathway is quinol/quinone metabolism; menaquinone biosynthesis. In terms of biological role, catalyzes a proton abstraction reaction that results in 2,5-elimination of pyruvate from 2-succinyl-5-enolpyruvyl-6-hydroxy-3-cyclohexene-1-carboxylate (SEPHCHC) and the formation of 2-succinyl-6-hydroxy-2,4-cyclohexadiene-1-carboxylate (SHCHC). The chain is 2-succinyl-6-hydroxy-2,4-cyclohexadiene-1-carboxylate synthase from Salmonella typhimurium (strain LT2 / SGSC1412 / ATCC 700720).